We begin with the raw amino-acid sequence, 129 residues long: uncharacterized protein (129 aa).

This sequence belongs to the asfivirus C129R family.

It localises to the virion. Its function is as follows. Plays a role in the inhibition of type I interferon signaling pathway. Mechanistically, specifically interacts with 2',3'-cGAMP and cleaves it via its phosphodiesterase activity. In turn, prevents 2',3'-cGAMP interaction with host ER-resident STING1 leading to inhibition of downstream signaling pathway and type I interferon production. This is an uncharacterized protein from Ornithodoros (relapsing fever ticks).